The primary structure comprises 240 residues: 6-phosphogluconolactonase (240 aa).

The protein belongs to the glucosamine/galactosamine-6-phosphate isomerase family. 6-phosphogluconolactonase subfamily.

The enzyme catalyses 6-phospho-D-glucono-1,5-lactone + H2O = 6-phospho-D-gluconate + H(+). It functions in the pathway carbohydrate degradation; pentose phosphate pathway; D-ribulose 5-phosphate from D-glucose 6-phosphate (oxidative stage): step 2/3. Hydrolysis of 6-phosphogluconolactone to 6-phosphogluconate. This Nostoc sp. (strain PCC 7120 / SAG 25.82 / UTEX 2576) protein is 6-phosphogluconolactonase (pgl).